The chain runs to 276 residues: Large ribosomal subunit protein uL2 (276 aa).

Residues 223 to 276 (AVMNPVDHPHGGGEGKNSVGRKSPLTPWGKPALGIKTRGRKTSDKFIVRRRNEK) form a disordered region. Positions 263 to 276 (KTSDKFIVRRRNEK) are enriched in basic and acidic residues.

The protein belongs to the universal ribosomal protein uL2 family. Part of the 50S ribosomal subunit. Forms a bridge to the 30S subunit in the 70S ribosome.

Functionally, one of the primary rRNA binding proteins. Required for association of the 30S and 50S subunits to form the 70S ribosome, for tRNA binding and peptide bond formation. It has been suggested to have peptidyltransferase activity; this is somewhat controversial. Makes several contacts with the 16S rRNA in the 70S ribosome. In Fusobacterium nucleatum subsp. nucleatum (strain ATCC 25586 / DSM 15643 / BCRC 10681 / CIP 101130 / JCM 8532 / KCTC 2640 / LMG 13131 / VPI 4355), this protein is Large ribosomal subunit protein uL2.